We begin with the raw amino-acid sequence, 580 residues long: Benzoate--CoA ligase, peroxisomal (580 aa).

Residues S578 to L580 carry the Microbody targeting signal motif.

Belongs to the ATP-dependent AMP-binding enzyme family.

It is found in the peroxisome. The catalysed reaction is benzoate + ATP + CoA = benzoyl-CoA + AMP + diphosphate. Its function is as follows. Benzoate--CoA ligase involved in benzoyloxyglucosinolate biosynthesis in seeds. Glucosinolates are secondary metabolites involved in pathogen and insect defense of cruciferous plants. The polypeptide is Benzoate--CoA ligase, peroxisomal (AAE20) (Arabidopsis thaliana (Mouse-ear cress)).